A 276-amino-acid polypeptide reads, in one-letter code: Krueppel homolog 2 (276 aa).

The disordered stretch occupies residues 1–37 (MSAPTDQPPRSEGAQTNSSERSSQQQEQPQQSQSQNV). Residues 18 to 35 (SSERSSQQQEQPQQSQSQ) show a composition bias toward low complexity. Ser-22 carries the phosphoserine modification. The next 3 helical transmembrane spans lie at 53-73 (ALWALRLLVIFFTVSYVLPIF), 125-145 (LIFFNIRPSLLVLIPVLLYSV), and 181-201 (ILKATAFCEIFIMPYAIVLAF).

This sequence belongs to the PER33/POM33 family.

Its subcellular location is the membrane. Its function is as follows. Member of the dosage-dependent hierarchy effective upon white gene expression. The chain is Krueppel homolog 2 (Kr-h2) from Drosophila melanogaster (Fruit fly).